The sequence spans 490 residues: Betaine aldehyde dehydrogenase (490 aa).

K(+) is bound by residues threonine 26 and aspartate 93. 150-152 (GAW) serves as a coordination point for NAD(+). The active-site Charge relay system is the lysine 162. 176–179 (KPSE) serves as a coordination point for NAD(+). Valine 180 is a K(+) binding site. Position 230–233 (230–233 (GVAT)) interacts with NAD(+). Leucine 246 serves as a coordination point for K(+). Glutamate 252 (proton acceptor) is an active-site residue. Positions 254, 286, and 387 each coordinate NAD(+). The active-site Nucleophile is the cysteine 286. Cysteine sulfenic acid (-SOH) is present on cysteine 286. Lysine 457 and glycine 460 together coordinate K(+). Glutamate 464 serves as the catalytic Charge relay system.

Belongs to the aldehyde dehydrogenase family. In terms of assembly, dimer of dimers. K(+) is required as a cofactor.

It catalyses the reaction betaine aldehyde + NAD(+) + H2O = glycine betaine + NADH + 2 H(+). It functions in the pathway amine and polyamine biosynthesis; betaine biosynthesis via choline pathway; betaine from betaine aldehyde: step 1/1. Involved in the biosynthesis of the osmoprotectant glycine betaine. Catalyzes the irreversible oxidation of betaine aldehyde to the corresponding acid. In Stenotrophomonas maltophilia (strain K279a), this protein is Betaine aldehyde dehydrogenase.